A 152-amino-acid polypeptide reads, in one-letter code: Ribosome maturation factor RimP (152 aa).

Belongs to the RimP family.

Its subcellular location is the cytoplasm. Required for maturation of 30S ribosomal subunits. The sequence is that of Ribosome maturation factor RimP from Yersinia pestis.